Consider the following 310-residue polypeptide: Protoheme IX farnesyltransferase 2 (310 aa).

9 helical membrane-spanning segments follow: residues 25–45 (PGIIFGNLISVAGGFLLAAKG), 49–69 (LVLMLASLVGLSLVVASGCAI), 87–107 (RVTVTGEIAVGNVLAFGLALG), 120–139 (ALALLFAVIGYIVYVGVYSL), 145–165 (SVYGTLVGSFSGAVPPVVGYC), 176–196 (AILLLMFSLWQMPHSYAIAIF), 220–240 (LHIVLYIAVFALVSALLPLAG), 242–262 (TGIAFMAVTCATSLWWLAMAL), and 277–297 (QVFGFSIITITALSVTMALDF).

It belongs to the UbiA prenyltransferase family. Protoheme IX farnesyltransferase subfamily.

Its subcellular location is the cell inner membrane. The catalysed reaction is heme b + (2E,6E)-farnesyl diphosphate + H2O = Fe(II)-heme o + diphosphate. It participates in porphyrin-containing compound metabolism; heme O biosynthesis; heme O from protoheme: step 1/1. Its function is as follows. Converts heme B (protoheme IX) to heme O by substitution of the vinyl group on carbon 2 of heme B porphyrin ring with a hydroxyethyl farnesyl side group. This chain is Protoheme IX farnesyltransferase 2, found in Shewanella baltica (strain OS185).